Consider the following 365-residue polypeptide: IgG receptor FcRn large subunit p51 (365 aa).

A signal peptide spans 1–23 (MGVPRPQPWALGLLLFLLPGSLG). The alpha-1 stretch occupies residues 24-110 (AESHLSLLYH…AFKALGGKGP (87 aa)). The Extracellular portion of the chain corresponds to 24–297 (AESHLSLLYH…VELESPAKSS (274 aa)). The tract at residues 111–200 (YTLQGLLGCE…ERGRGNLEWK (90 aa)) is alpha-2. Intrachain disulfides connect C119-C182 and C221-C275. N-linked (GlcNAc...) asparagine glycosylation is present at N125. An alpha-3 region spans residues 201-290 (EPPSMRLKAR…GLAQPLRVEL (90 aa)). The Ig-like C1-type domain maps to 202–289 (PPSMRLKARP…AGLAQPLRVE (88 aa)). Residues 291–297 (ESPAKSS) form a connecting peptide region. The helical transmembrane segment at 298–321 (VLVVGIVIGVLLLTAAAVGGALLW) threads the bilayer. Residues 322 to 365 (RRMRSGLPAPWISLRGDDTGVLLPTPGEAQDADLKDVNVIPATA) are Cytoplasmic-facing. At S334 the chain carries Phosphoserine.

This sequence belongs to the immunoglobulin superfamily. In terms of assembly, fcRn complex consists of two subunits: p51, and p14 which is equivalent to beta-2-microglobulin. It forms an MHC class I-like heterodimer. Interacts with albumin/ALB; this interaction regulates ALB homeostasis. As to quaternary structure, (Microbial infection) Interacts with Echovirus 6, Echovirus 11 and Echovirus 30 capsid protein VP1. Expressed in full-term placenta, heart, lung, liver, muscle, kidney, pancreas, and both fetal and adult small intestine.

It is found in the cell membrane. The protein localises to the endosome membrane. Its function is as follows. Cell surface receptor that transfers passive humoral immunity from the mother to the newborn. Binds to the Fc region of monomeric immunoglobulin gamma and mediates its selective uptake from milk. IgG in the milk is bound at the apical surface of the intestinal epithelium. The resultant FcRn-IgG complexes are transcytosed across the intestinal epithelium and IgG is released from FcRn into blood or tissue fluids. Throughout life, contributes to effective humoral immunity by recycling IgG and extending its half-life in the circulation. Mechanistically, monomeric IgG binding to FcRn in acidic endosomes of endothelial and hematopoietic cells recycles IgG to the cell surface where it is released into the circulation. In addition of IgG, regulates homeostasis of the other most abundant circulating protein albumin/ALB. Functionally, (Microbial infection) Acts as an uncoating receptor for a panel of echoviruses including Echovirus 5, 6, 7, 9, 11, 13, 25 and 29. The sequence is that of IgG receptor FcRn large subunit p51 (FCGRT) from Homo sapiens (Human).